The sequence spans 190 residues: MNFLLSWVHWSLALLLYLHHAKWSQAAPMAEGDQKPHEVVKFMDVYQRSYCRPIETLVDIFQEYPDEIEYIFKPSCVPLMRCGGCCNDEGLECVPTEEFNITMQIMRIKPHQGQHIGEMSFLQHNKCECRPKKDRARQENPCGPCSERRKHLFVQDPQTCKCSCKNTDSRCKARQLELNERTCRCDKPRR.

The signal sequence occupies residues 1–26 (MNFLLSWVHWSLALLLYLHHAKWSQA). Cystine bridges form between cysteine 51–cysteine 93, cysteine 82–cysteine 127, and cysteine 86–cysteine 129. The N-linked (GlcNAc...) asparagine glycan is linked to asparagine 100.

It belongs to the PDGF/VEGF growth factor family. Homodimer; disulfide-linked. Also found as heterodimer with PGF. Interacts with NRP1. Interacts with BSG. Interacts with CD82; this interaction inhibits VEGFA-mediated signaling pathway.

It is found in the secreted. Growth factor active in angiogenesis, vasculogenesis and endothelial cell growth. Induces endothelial cell proliferation, promotes cell migration, inhibits apoptosis and induces permeabilization of blood vessels. Binds to the FLT1/VEGFR1 and KDR/VEGFR2 receptors, heparan sulfate and heparin. Binding to NRP1 receptor initiates a signaling pathway needed for motor neuron axon guidance and cell body migration, including for the caudal migration of facial motor neurons from rhombomere 4 to rhombomere 6 during embryonic development. Also binds the DEAR/FBXW7-AS1 receptor. The chain is Vascular endothelial growth factor A (VEGFA) from Sus scrofa (Pig).